We begin with the raw amino-acid sequence, 193 residues long: uncharacterized protein (193 aa).

This is an uncharacterized protein from Saccharomyces cerevisiae (strain ATCC 204508 / S288c) (Baker's yeast).